A 277-amino-acid polypeptide reads, in one-letter code: Chitosanase (277 aa).

The signal sequence occupies residues 1-35 (MKISMQKADFWKKAAISLLVFTMFFTLMMSETVFA). The active-site Proton donor is the Glu54. Asp70 acts as the Nucleophile in catalysis.

This sequence belongs to the glycosyl hydrolase 46 family.

The protein localises to the secreted. It catalyses the reaction Endohydrolysis of beta-(1-&gt;4)-linkages between D-glucosamine residues in a partly acetylated chitosan.. Its function is as follows. Aids in the defense against invading fungal pathogens by degrading their cell wall chitosan. In Bacillus subtilis (strain 168), this protein is Chitosanase (csn).